Consider the following 164-residue polypeptide: Outer membrane protein assembly factor BamE (164 aa).

Residues 1–19 (MHAFFPRLLLLLLFLPLTH) form the signal peptide. The interval 111–164 (PAFSESEPAQNFFSPEQTFTPAPDTDSNMNEEPDKKGTVNFLKENQTNFYKDNQ) is disordered. Polar residues-rich tracts occupy residues 117–140 (EPAQ…SNMN) and 153–164 (KENQTNFYKDNQ).

This sequence belongs to the BamE family. Part of the Bam complex.

Its subcellular location is the cell outer membrane. Functionally, part of the outer membrane protein assembly complex, which is involved in assembly and insertion of beta-barrel proteins into the outer membrane. This is Outer membrane protein assembly factor BamE from Nitrosomonas europaea (strain ATCC 19718 / CIP 103999 / KCTC 2705 / NBRC 14298).